We begin with the raw amino-acid sequence, 109 residues long: Cell cycle protein GpsB (109 aa).

Positions 36-63 (IKDYETYAALVKSLRQEIADLKEELTRK) form a coiled coil.

Belongs to the GpsB family. In terms of assembly, forms polymers through the coiled coil domains. Interacts with PBP1, MreC and EzrA.

It localises to the cytoplasm. Divisome component that associates with the complex late in its assembly, after the Z-ring is formed, and is dependent on DivIC and PBP2B for its recruitment to the divisome. Together with EzrA, is a key component of the system that regulates PBP1 localization during cell cycle progression. Its main role could be the removal of PBP1 from the cell pole after pole maturation is completed. Also contributes to the recruitment of PBP1 to the division complex. Not essential for septum formation. This Streptococcus pneumoniae serotype 4 (strain ATCC BAA-334 / TIGR4) protein is Cell cycle protein GpsB.